A 133-amino-acid polypeptide reads, in one-letter code: Succinate dehydrogenase assembly factor 3, mitochondrial (133 aa).

The N-terminal 12 residues, 1-12, are a transit peptide targeting the mitochondrion; it reads MNNKLIYRSVRF.

It belongs to the complex I LYR family. SDHAF3 subfamily. As to quaternary structure, interacts with SDH2 within an SDH1-SDH2 subcomplex.

It localises to the mitochondrion. Its subcellular location is the mitochondrion intermembrane space. It is found in the mitochondrion matrix. Its function is as follows. Plays an essential role in the assembly of succinate dehydrogenase (SDH), an enzyme complex (also referred to as respiratory complex II) that is a component of both the tricarboxylic acid (TCA) cycle and the mitochondrial electron transport chain, and which couples the oxidation of succinate to fumarate with the reduction of ubiquinone (coenzyme Q) to ubiquinol. Promotes maturation of the iron-sulfur protein subunit SDH2 of the SDH catalytic dimer, protecting it from the deleterious effects of oxidants. Acts together with SDHAF1 (SDH6). The sequence is that of Succinate dehydrogenase assembly factor 3, mitochondrial from Saccharomyces cerevisiae (strain ATCC 204508 / S288c) (Baker's yeast).